The chain runs to 493 residues: Voltage-gated potassium channel regulatory subunit KCNF1 (493 aa).

At 1–183 the chain is on the cytoplasmic side; that stretch reads MDASAEQSLP…KPESSCPARV (183 aa). Residues 184 to 204 form a helical membrane-spanning segment; that stretch reads VAVLSFLLILVSSVVMCMGTI. The chain crosses the membrane as a helical span at residues 224–244; it reads NVETACIGWFTLEYLLRLFSS. Residues 245 to 249 are Cytoplasmic-facing; that stretch reads PNKLH. A helical membrane pass occupies residues 250 to 270; the sequence is FALSFMNIVDVLAILPFYVSL. Residues 290–310 form a helical; Voltage-sensor membrane-spanning segment; sequence QALRIMRIARIFKLARHSSGL. The Cytoplasmic segment spans residues 311–324; the sequence is QTLTYALKRSFKEL. The helical transmembrane segment at 325–345 threads the bilayer; sequence GLLLMYLAVGIFVFSALGYTM. The segment at residues 358–378 is an intramembrane region (pore-forming); sequence PQSFWWAIITMTTVGYGDIYP. The short motif at 370–375 is the Selectivity filter element; the sequence is TVGYGD. A helical transmembrane segment spans residues 386 to 406; the sequence is NAAISFLCGVIAIALPIHPII. Residues 407–493 are Cytoplasmic-facing; it reads NNFVRYYNKQ…HHRTRLQSCK (87 aa). The tract at residues 434–468 is disordered; the sequence is SSSAEGKPGGSRSDLDTLPPEPAAREGPSWGSRLK.

Belongs to the potassium channel family. F (TC 1.A.1.2) subfamily. Kv5.1/KCNF1 sub-subfamily. In terms of assembly, heterotetramer with KCNB1 or KCNB2.

It localises to the cell membrane. In terms of biological role, regulatory alpha-subunit of the voltage-gated potassium (Kv) channel which, when coassembled with KCNB1 or KCNB2, can modulate their expression and their gating kinetics by acting on deactivation upon repolarization and inactivation during maintained depolarization. Accelerates inactivation but has relatively little effect on deactivation. Coexpression with KCNB1 or KCNB2 markedly slows inactivation. Each modulatory subunit has its own specific properties of regulation, and can lead to extensive inhibitions, to large changes in kinetics, and/or to large shifts in the voltage dependencies of the inactivation process. The gating kinetics depends on the nature and stoichiometry of the associated regulatory sunbunit. Fails to produce a potassium current when expressed alone. This Mus musculus (Mouse) protein is Voltage-gated potassium channel regulatory subunit KCNF1.